The following is a 498-amino-acid chain: NADPH:adrenodoxin oxidoreductase, mitochondrial (498 aa).

The N-terminal 37 residues, 1–37, are a transit peptide targeting the mitochondrion; the sequence is MSTHKAALCKVQILKLFLISARCVRITRFYGVCGLST. A54, E75, L83, and V119 together coordinate FAD. NADP(+) is bound by residues 190-193, 234-235, and E246; these read QGNV and RR. Residues W404 and 411 to 413 each bind FAD; that span reads GVI. G411 is a binding site for NADP(+). The span at 469–488 shows a compositional bias: basic and acidic residues; sequence DSEETRRGETRGKPREKMLD. The tract at residues 469-489 is disordered; sequence DSEETRRGETRGKPREKMLDV.

It belongs to the ferredoxin--NADP reductase type 1 family. The cofactor is FAD.

Its subcellular location is the mitochondrion inner membrane. The enzyme catalyses 2 reduced [adrenodoxin] + NADP(+) + H(+) = 2 oxidized [adrenodoxin] + NADPH. It participates in steroid metabolism; cholesterol metabolism. Its function is as follows. Serves as the first electron transfer protein in all the mitochondrial P450 systems including cholesterol side chain cleavage in all steroidogenic tissues, steroid 11-beta hydroxylation in the adrenal cortex, 25-OH-vitamin D3-24 hydroxylation in the kidney, and sterol C-27 hydroxylation in the liver. This is NADPH:adrenodoxin oxidoreductase, mitochondrial (fdxr) from Salvelinus fontinalis (Brook trout).